A 187-amino-acid polypeptide reads, in one-letter code: Elongation factor P (187 aa).

Belongs to the elongation factor P family.

Its subcellular location is the cytoplasm. It functions in the pathway protein biosynthesis; polypeptide chain elongation. Its function is as follows. Involved in peptide bond synthesis. Stimulates efficient translation and peptide-bond synthesis on native or reconstituted 70S ribosomes in vitro. Probably functions indirectly by altering the affinity of the ribosome for aminoacyl-tRNA, thus increasing their reactivity as acceptors for peptidyl transferase. This is Elongation factor P from Synechococcus sp. (strain CC9605).